A 362-amino-acid chain; its full sequence is Caveolae-associated protein 4 (362 aa).

The interval 1 to 24 (MEHNGSASNAGKIHQNRLSSVTED) is disordered. The stretch at 100-120 (IKDVKARVEKQQVRVTKVETK) forms a coiled coil. Residues S152, S171, and S172 each carry the phosphoserine modification. The segment covering 227-255 (PERRERLRQSGERLRQSGERLRQSGERFK) has biased composition (basic and acidic residues). The segment at 227-261 (PERRERLRQSGERLRQSGERLRQSGERFKKSISNA) is disordered. Y324 carries the phosphotyrosine modification. T334 is modified (phosphothreonine). S353 carries the post-translational modification Phosphoserine.

The protein belongs to the CAVIN family. Component of the CAVIN complex composed of CAVIN1, CAVIN2, CAVIN3 and CAVIN4. Interacts with CAVIN1, CAV3, ADRA1A and ADRA1B. Interacts with CAVIN2; this augments the transactivation of NPPA. Interacts with MAPK1 and MAPK3. As to expression, expressed at much higher levels in cardiomyocytes than in non-cardiomyocytes.

It is found in the cytoplasm. The protein localises to the myofibril. The protein resides in the sarcomere. It localises to the cytosol. Its subcellular location is the cell membrane. It is found in the sarcolemma. The protein localises to the membrane. The protein resides in the caveola. Functionally, modulates the morphology of formed caveolae in cardiomyocytes, but is not required for caveolar formation. Facilitates the recruitment of MAPK1/3 to caveolae within cardiomyocytes and regulates alpha-1 adrenergic receptor-induced hypertrophic responses in cardiomyocytes through MAPK1/3 activation. Contributes to proper membrane localization and stabilization of caveolin-3 (CAV3) in cardiomyocytes. Induces RHOA activation and activates NPPA transcription and myofibrillar organization through the Rho/ROCK signaling pathway. In Rattus norvegicus (Rat), this protein is Caveolae-associated protein 4.